An 87-amino-acid polypeptide reads, in one-letter code: U3-theraphotoxin-Cg1b (87 aa).

The N-terminal stretch at 1–23 (MRTFTLIAILTCAVLVIFHVSAA) is a signal peptide. The propeptide occupies 24-48 (EELEAQDVIQPEDIFTGVATLEEDR). Disulfide bonds link cysteine 52–cysteine 65, cysteine 56–cysteine 79, and cysteine 73–cysteine 84.

This sequence belongs to the neurotoxin 12 (Hwtx-2) family. 03 (juruin) subfamily. As to expression, expressed by the venom gland.

It is found in the secreted. Its function is as follows. Probable ion channel inhibitor. This is U3-theraphotoxin-Cg1b from Chilobrachys guangxiensis (Chinese earth tiger tarantula).